The primary structure comprises 142 residues: Large ribosomal subunit protein uL11 (142 aa).

It belongs to the universal ribosomal protein uL11 family. In terms of assembly, part of the ribosomal stalk of the 50S ribosomal subunit. Interacts with L10 and the large rRNA to form the base of the stalk. L10 forms an elongated spine to which L12 dimers bind in a sequential fashion forming a multimeric L10(L12)X complex. Post-translationally, one or more lysine residues are methylated.

Its function is as follows. Forms part of the ribosomal stalk which helps the ribosome interact with GTP-bound translation factors. This Shewanella oneidensis (strain ATCC 700550 / JCM 31522 / CIP 106686 / LMG 19005 / NCIMB 14063 / MR-1) protein is Large ribosomal subunit protein uL11.